The primary structure comprises 564 residues: NAD-dependent malic enzyme (564 aa).

Y104 serves as the catalytic Proton donor. Residue R157 coordinates NAD(+). Residue K175 is the Proton acceptor of the active site. E246, D247, and D270 together coordinate a divalent metal cation. NAD(+)-binding residues include D270 and N417.

The protein belongs to the malic enzymes family. Homotetramer. Requires Mg(2+) as cofactor. The cofactor is Mn(2+).

The catalysed reaction is (S)-malate + NAD(+) = pyruvate + CO2 + NADH. It carries out the reaction oxaloacetate + H(+) = pyruvate + CO2. The polypeptide is NAD-dependent malic enzyme (Aeromonas salmonicida (strain A449)).